The chain runs to 7073 residues: Replicase polyprotein 1ab (7073 aa).

The Cytoplasmic segment spans residues Met1–Lys2202. A CoV Nsp1 globular domain is found at Thr12–Gly127. A BetaCoV Nsp1 C-terminal domain is found at Glu148 to Gly179. The 274-residue stretch at Thr183–Arg456 folds into the CoV Nsp2 N-terminal domain. Zn(2+)-binding residues include Cys200, Cys231, His234, His236, Cys323, Cys326, Cys341, Cys344, Cys370, Cys373, His382, and Cys416. The tract at residues Cys200–His236 is C2H2. Positions Cys323–Cys344 are C4. Positions Cys370 to Cys416 are C2HC. Residues Arg458–Met688 enclose the CoV Nsp2 middle domain. Residues Ile690–Gly818 form the CoV Nsp2 C-terminal domain. Residues Lys822–Glu930 form the Ubiquitin-like 1 domain. Disordered regions lie at residues Arg972–Val1003 and Arg1175–Val1198. A compositionally biased stretch (acidic residues) spans Glu974–Pro999. Residues Val1003–Leu1169 form the Macro 1 domain. 2 consecutive Macro domains span residues Lys1207–Glu1335 and Ile1343–Ser1470. The DPUP domain maps to Thr1472 to Ser1538. Residues Val1542–Val1597 enclose the Ubiquitin-like 2 domain. Positions Tyr1611–Gly1875 constitute a Peptidase C16 domain. Cys1651 (for PL-PRO activity) is an active-site residue. 4 residues coordinate Zn(2+): Cys1729, Cys1732, Cys1764, and Cys1766. The segment at Cys1729–Cys1766 adopts a C4-type zinc-finger fold. Active-site for PL-PRO activity residues include His1812 and Asp1826. A Nucleic acid-binding domain is found at Pro1888–Thr1998. The 110-residue stretch at Pro2023–Asn2132 folds into the G2M domain. Residues Leu2203–Val2223 traverse the membrane as a helical segment. The segment at Leu2203–Met2324 is HD1. Positions Thr2224 to Asp2294 constitute a 3Ecto domain. At Thr2224–Glu2303 the chain is on the lumenal side. 2 cysteine pairs are disulfide-bonded: Cys2240–Cys2268 and Cys2259–Cys2265. Residues Trp2304–Met2324 traverse the membrane as a helical segment. The Cytoplasmic segment spans residues Gln2325–Thr2754. The Y1 stretch occupies residues Lys2372–Asp2462. In terms of domain architecture, CoV Nsp3 Y spans Lys2372–Gly2740. Residues His2376, Cys2381, Cys2386, Cys2389, Cys2422, His2425, Cys2429, and Cys2432 each contribute to the Zn(2+) site. The tract at residues His2376–Cys2389 is ZF1. Residues Cys2422 to Cys2432 form a ZF2 region. The segment at Gln2463–Val2557 is Y2. The segment at Gln2463–Gly2740 is coV-Y. Positions Gly2558–Asp2639 are Y3. Residues Leu2640–Gly2740 form a Y4 region. Residues Leu2755–Ile2775 traverse the membrane as a helical segment. Residues Leu2755–Ile3125 form an HD2 region. Residues His2776–Ser3021 are Lumenal-facing. The chain crosses the membrane as a helical span at residues Ala3022 to Met3042. Over Lys3043–Ser3076 the chain is Cytoplasmic. The helical transmembrane segment at Phe3077–Val3097 threads the bilayer. The Lumenal portion of the chain corresponds to Ser3098–Gln3104. A helical transmembrane segment spans residues Trp3105–Ile3125. The Cytoplasmic segment spans residues Ser3126 to Thr3563. Positions Val3142–Gln3240 constitute a Nsp4C domain. Residues Ser3241–Gln3546 enclose the Peptidase C30 domain. Active-site for 3CL-PRO activity residues include His3281 and Cys3385. Residues Phe3564–Tyr3584 traverse the membrane as a helical segment. An HD3 region spans residues Phe3564–Leu3776. Glu3585 is a topological domain (lumenal). The chain crosses the membrane as a helical span at residues Asn3586 to Val3606. The Cytoplasmic segment spans residues Lys3607–Ala3611. Residues Phe3612 to Met3632 form a helical membrane-spanning segment. The Lumenal segment spans residues Pro3633–Lys3657. Residues Asp3658–Tyr3678 traverse the membrane as a helical segment. Residues Asp3679–Thr3727 are Cytoplasmic-facing. The chain crosses the membrane as a helical span at residues Ile3728–Ile3748. The Lumenal segment spans residues Thr3749–Cys3755. Residues Ile3756–Leu3776 traverse the membrane as a helical segment. Topologically, residues Leu3777–Asn7073 are cytoplasmic. The 83-residue stretch at Ser3837 to Gln3919 folds into the RdRp Nsp7 cofactor domain. The region spanning Ala3920 to Gln4117 is the RdRp Nsp8 cofactor domain. The Nsp9 ssRNA-binding domain occupies Asn4118–Gln4230. Positions Ala4231–Gln4369 constitute an ExoN/MTase coactivator domain. Positions 4304, 4307, 4313, 4320, 4347, 4350, 4358, and 4360 each coordinate Zn(2+). 2 zinc fingers span residues Cys4304–Cys4320 and Cys4347–Cys4360. The NiRAN domain occupies Phe4376–Leu4630. Asn4578 and Asp4587 together coordinate Mn(2+). One can recognise a Nsp12 Interface domain in the interval Ile4635 to Ser4733. Positions 4664, 4670, 4675, 4679, and 4856 each coordinate Zn(2+). One can recognise a Nsp12 RNA-dependent RNA polymerase domain in the interval Arg4734–Gln5301. The segment at Ser4736 to Ala4950 is rdRp Fingers N-ter. The segment at Thr4951–Pro4989 is rdRp Palm N-ter. Positions Pro4981–Gly5143 constitute a RdRp catalytic domain. Positions Lys4990–Gly5048 are rdRp Fingers C-ter. The Zn(2+) site is built by His5011, Cys5014, and Cys5015. The interval Thr5049–Gln5184 is rdRp Palm C-ter. Catalysis depends on residues Ser5128, Asp5129, and Asp5130. Residues His5185–Gln5301 form a rdRp Thumb region. Positions Ala5302 to Asp5414 constitute a CV ZBD domain. Zn(2+)-binding residues include Cys5306, Cys5309, Cys5317, Cys5320, Cys5327, Cys5330, His5334, His5340, Cys5351, Cys5356, Cys5373, and His5376. The (+)RNA virus helicase ATP-binding domain occupies Asn5558–Leu5739. Gly5583–Ser5590 is an ATP binding site. One can recognise a (+)RNA virus helicase C-terminal domain in the interval Gly5740–Leu5909. The ExoN domain occupies Met5974 to Val6189. Residues Asp5992, Glu5994, and Glu6093 contribute to the active site. Residues Glu5994 and Glu6093 each contribute to the Mg(2+) site. 7 residues coordinate Zn(2+): Cys6109, Cys6112, Cys6128, His6131, His6159, Cys6163, and His6166. Catalysis depends on residues His6170 and Asp6175. Mg(2+) is bound by residues His6170 and Asp6175. Cys6181 contacts Zn(2+). An N7-MTase domain is found at Tyr6198–Gln6429. S-adenosyl-L-methionine is bound at residue Asp6233–Ala6239. A gpppA-binding region spans residues Cys6316 to Thr6330. Zn(2+)-binding residues include Cys6354, Cys6375, Cys6386, and His6389. Residues Ser6430–Arg6490 enclose the Nsp15 N-terminal oligomerization domain. Residues Asn6491–Gln6616 enclose the AV-Nsp11N/CoV-Nsp15M domain. The NendoU domain occupies Lys6633 to Pro6772. Residues His6663, His6678, Lys6718, Lys6821, Asp6905, Lys6945, and Glu6978 contribute to the active site. Residues Ser6777–Val7071 form the Nidovirus-type SAM-dependent 2'-O-MTase domain.

The protein belongs to the coronaviruses polyprotein 1ab family. As to quaternary structure, interacts with host PHB and PHB2. Interacts with papain-like protease nsp3 and non-structural protein 6. In terms of assembly, monomer. Homodimer. Only the homodimer shows catalytic activity. As to quaternary structure, interacts with nsp8 and nsp12 to form the replication-transcription complex (RTC): nsp12, nsp7, two subunits of nsp8, and up to two subunits of nsp13. Eight copies of nsp7 and eight copies of nsp8 assemble to form a heterohexadecamer dsRNA-encircling ring structure. Interacts with nsp7, nsp13 and nsp12 to form the replication-transcription complex (RTC): nsp12, nsp7, two subunits of nsp8, and up to two subunits of nsp13. Eight copies of nsp7 and eight copies of nsp8 assemble to form a heterohexadecamer dsRNA-encircling ring structure. Interacts with ORF6 protein. In terms of assembly, homodimer. Interacts with nsp12. As to quaternary structure, homododecamer. Interacts with proofreading exoribonuclease nsp14 and 2'-O-methyltransferase nsp16; these interactions enhance nsp14 and nsp16 enzymatic activities. Interacts with nsp7 and nsp8 to form the replication-transcription complex (RTC): nsp12, nsp7, two subunits of nsp8, and up to two subunits of nsp13. Interacts with nsp9. In terms of assembly, interacts with nsp8 to form the replication-transcription complex (RTC): nsp12, nsp7, two subunits of nsp8, and up to two subunits of nsp13. As to quaternary structure, interacts (via N-terminus) with host DDX1. Interacts with non-structural protein 10. Homohexamer. In terms of assembly, interacts with nsp10. Zn(2+) serves as cofactor. It depends on Mn(2+) as a cofactor. Mg(2+) is required as a cofactor. Specific enzymatic cleavages in vivo by its own proteases yield mature proteins. 3C-like proteinase nsp5 liberates nsps 6-16 from the polyprotein. Papain-like and 3C-like proteinases are autocatalytically processed.

The protein resides in the host cytoplasm. It is found in the host endosome. The protein localises to the host membrane. It localises to the host Golgi apparatus. Its subcellular location is the host perinuclear region. The protein resides in the host endoplasmic reticulum. It is found in the host endoplasmic reticulum-Golgi intermediate compartment. The catalysed reaction is RNA(n) + a ribonucleoside 5'-triphosphate = RNA(n+1) + diphosphate. The enzyme catalyses ATP + H2O = ADP + phosphate + H(+). It carries out the reaction TSAVLQ-|-SGFRK-NH2 and SGVTFQ-|-GKFKK the two peptides corresponding to the two self-cleavage sites of the SARS 3C-like proteinase are the two most reactive peptide substrates. The enzyme exhibits a strong preference for substrates containing Gln at P1 position and Leu at P2 position.. It catalyses the reaction Thiol-dependent hydrolysis of ester, thioester, amide, peptide and isopeptide bonds formed by the C-terminal Gly of ubiquitin (a 76-residue protein attached to proteins as an intracellular targeting signal).. The catalysed reaction is a 5'-end (N(7)-methyl 5'-triphosphoguanosine)-ribonucleoside in mRNA + S-adenosyl-L-methionine = a 5'-end (N(7)-methyl 5'-triphosphoguanosine)-(2'-O-methyl-ribonucleoside) in mRNA + S-adenosyl-L-homocysteine + H(+). The enzyme catalyses uridylyl-uridylyl-ribonucleotide-RNA = a 3'-end uridylyl-2',3'-cyclophospho-uridine-RNA + a 5'-end dephospho-ribonucleoside-RNA. It carries out the reaction a 5'-end (5'-triphosphoguanosine)-ribonucleoside in mRNA + S-adenosyl-L-methionine = a 5'-end (N(7)-methyl 5'-triphosphoguanosine)-ribonucleoside in mRNA + S-adenosyl-L-homocysteine. It catalyses the reaction a 5'-end diphospho-ribonucleoside in mRNA + GTP + H(+) = a 5'-end (5'-triphosphoguanosine)-ribonucleoside in mRNA + diphosphate. Its activity is regulated as follows. Inhibited by Remdesivir (GS-5734). Its function is as follows. Multifunctional protein involved in the transcription and replication of viral RNAs. Contains the proteinases responsible for the cleavages of the polyprotein. In terms of biological role, inhibits host translation by interacting with the 40S ribosomal subunit. The nsp1-40S ribosome complex further induces an endonucleolytic cleavage near the 5'UTR of host mRNAs, targeting them for degradation. Viral mRNAs are not susceptible to nsp1-mediated endonucleolytic RNA cleavage thanks to the presence of a 5'-end leader sequence and are therefore protected from degradation. By suppressing host gene expression, nsp1 facilitates efficient viral gene expression in infected cells and evasion from host immune response. May disrupt nuclear pore function by binding and displacing host NUP93. May play a role in the modulation of host cell survival signaling pathway by interacting with host PHB and PHB2. Indeed, these two proteins play a role in maintaining the functional integrity of the mitochondria and protecting cells from various stresses. Functionally, responsible for the cleavages located at the N-terminus of the replicase polyprotein. In addition, PL-PRO possesses a deubiquitinating/deISGylating activity and processes both 'Lys-48'- and 'Lys-63'-linked polyubiquitin chains from cellular substrates. Plays a role in host membrane rearrangement that leads to creation of cytoplasmic double-membrane vesicles (DMV) necessary for viral replication. Nsp3, nsp4 and nsp6 together are sufficient to form DMV. Antagonizes innate immune induction of type I interferon by blocking the phosphorylation, dimerization and subsequent nuclear translocation of host IRF3. Also prevents host NF-kappa-B signaling. Its function is as follows. Plays a role in host membrane rearrangement that leads to creation of cytoplasmic double-membrane vesicles (DMV) necessary for viral replication. Alone appears incapable to induce membrane curvature, but together with nsp3 is able to induce paired membranes. Nsp3, nsp4 and nsp6 together are sufficient to form DMV. In terms of biological role, cleaves the C-terminus of replicase polyprotein at 11 sites. Recognizes substrates containing the core sequence [ILMVF]-Q-|-[SGACN]. May cleave human NLRP1 in lung epithelial cells, thereby activating the NLRP1 inflammasome pathway. Also able to bind an ADP-ribose-1''-phosphate (ADRP). May cleave host ATP6V1G1 thereby modifying host vacuoles intracellular pH. Plays a role in host membrane rearrangement that leads to creation of cytoplasmic double-membrane vesicles (DMV) necessary for viral replication. Nsp3, nsp4 and nsp6 together are sufficient to form DMV. Plays a role in the initial induction of autophagosomes from host endoplasmic reticulum. Later, limits the expansion of these phagosomes that are no longer able to deliver viral components to lysosomes. Functionally, forms a hexadecamer with nsp8 (8 subunits of each) that may participate in viral replication by acting as a primase. Alternatively, may synthesize substantially longer products than oligonucleotide primers. Its function is as follows. Forms a hexadecamer with nsp7 (8 subunits of each) that may participate in viral replication by acting as a primase. Alternatively, may synthesize substantially longer products than oligonucleotide primers. In terms of biological role, forms a primer, NSP9-pU, which is utilized by the polymerase for the initiation of RNA chains. Interacts with ribosome signal recognition particle RNA (SRP). Together with NSP8, suppress protein integration into the cell membrane, thereby disrupting host immune defenses. Plays a pivotal role in viral transcription by stimulating both nsp14 3'-5' exoribonuclease and nsp16 2'-O-methyltransferase activities. Therefore plays an essential role in viral mRNAs cap methylation. Functionally, RNA-directed RNA polymerase that catalyzes the transcription of viral genomic and subgenomic RNAs. Acts in complex with nsp7 and nsp8 to transcribe both the minus and positive strands of genomic RNA. The kinase-like NiRAN domain of NSP12 attaches one or more nucleotides to the amino terminus of NSP9, forming a covalent RNA-protein intermediate that serves as transcription/replication primer. Subgenomic RNAs (sgRNAs) are formed by discontinuous transcription: The polymerase has the ability to pause at transcription-regulating sequences (TRS) and jump to the leader TRS, resulting in a major deletion. This creates a series of subgenomic RNAs that are replicated, transcribed and translated. In addition, Nsp12 is a subunit of the viral RNA capping enzyme that catalyzes the RNA guanylyltransferase reaction for genomic and sub-genomic RNAs. Subsequently, the NiRAN domain transfers RNA to GDP, and forms the core cap structure GpppA-RNA. Its function is as follows. Multi-functional protein with a zinc-binding domain in N-terminus displaying RNA and DNA duplex-unwinding activities with 5' to 3' polarity. Activity of helicase is dependent on magnesium. In terms of biological role, plays a role in viral RNA synthesis through two distinct activities. The N7-guanine methyltransferase activity plays a role in the formation of the cap structure GpppA-RNA. The proofreading exoribonuclease reduces the sensitivity of the virus to RNA mutagens during replication. This activity acts on both ssRNA and dsRNA in a 3'-5' direction. Plays a role in viral transcription/replication and prevents the simultaneous activation of host cell dsRNA sensors, such as MDA5/IFIH1, OAS, and PKR. Acts by degrading the 5'-polyuridines generated during replication of the poly(A) region of viral genomic and subgenomic RNAs. Catalyzes a two-step reaction in which a 2'3'-cyclic phosphate (2'3'-cP) is first generated by 2'-O transesterification, which is then hydrolyzed to a 3'-phosphate (3'-P). If not degraded, poly(U) RNA would hybridize with poly(A) RNA tails and activate host dsRNA sensors. Functionally, methyltransferase that mediates mRNA cap 2'-O-ribose methylation to the 5'-cap structure of viral mRNAs. N7-methyl guanosine cap is a prerequisite for binding of nsp16. Therefore plays an essential role in viral mRNAs cap methylation which is essential to evade immune system. This chain is Replicase polyprotein 1ab (rep), found in Severe acute respiratory syndrome coronavirus (SARS-CoV).